A 227-amino-acid chain; its full sequence is 2-C-methyl-D-erythritol 4-phosphate cytidylyltransferase (227 aa).

Belongs to the IspD/TarI cytidylyltransferase family. IspD subfamily.

It carries out the reaction 2-C-methyl-D-erythritol 4-phosphate + CTP + H(+) = 4-CDP-2-C-methyl-D-erythritol + diphosphate. It functions in the pathway isoprenoid biosynthesis; isopentenyl diphosphate biosynthesis via DXP pathway; isopentenyl diphosphate from 1-deoxy-D-xylulose 5-phosphate: step 2/6. Its function is as follows. Catalyzes the formation of 4-diphosphocytidyl-2-C-methyl-D-erythritol from CTP and 2-C-methyl-D-erythritol 4-phosphate (MEP). This Lachnospira eligens (strain ATCC 27750 / DSM 3376 / VPI C15-48 / C15-B4) (Eubacterium eligens) protein is 2-C-methyl-D-erythritol 4-phosphate cytidylyltransferase.